We begin with the raw amino-acid sequence, 208 residues long: Ribosome maturation factor RimP (208 aa).

Residues 189–208 (EAPETGATTMARDGSEEETK) form a disordered region.

Belongs to the RimP family.

It localises to the cytoplasm. In terms of biological role, required for maturation of 30S ribosomal subunits. The chain is Ribosome maturation factor RimP from Ruegeria pomeroyi (strain ATCC 700808 / DSM 15171 / DSS-3) (Silicibacter pomeroyi).